The sequence spans 373 residues: UDP-N-acetylglucosamine--N-acetylmuramyl-(pentapeptide) pyrophosphoryl-undecaprenol N-acetylglucosamine transferase (373 aa).

UDP-N-acetyl-alpha-D-glucosamine-binding positions include 13-15, asparagine 124, arginine 165, serine 192, and glutamine 293; that span reads TGG.

It belongs to the glycosyltransferase 28 family. MurG subfamily.

It is found in the cell inner membrane. The enzyme catalyses di-trans,octa-cis-undecaprenyl diphospho-N-acetyl-alpha-D-muramoyl-L-alanyl-D-glutamyl-meso-2,6-diaminopimeloyl-D-alanyl-D-alanine + UDP-N-acetyl-alpha-D-glucosamine = di-trans,octa-cis-undecaprenyl diphospho-[N-acetyl-alpha-D-glucosaminyl-(1-&gt;4)]-N-acetyl-alpha-D-muramoyl-L-alanyl-D-glutamyl-meso-2,6-diaminopimeloyl-D-alanyl-D-alanine + UDP + H(+). Its pathway is cell wall biogenesis; peptidoglycan biosynthesis. Functionally, cell wall formation. Catalyzes the transfer of a GlcNAc subunit on undecaprenyl-pyrophosphoryl-MurNAc-pentapeptide (lipid intermediate I) to form undecaprenyl-pyrophosphoryl-MurNAc-(pentapeptide)GlcNAc (lipid intermediate II). This chain is UDP-N-acetylglucosamine--N-acetylmuramyl-(pentapeptide) pyrophosphoryl-undecaprenol N-acetylglucosamine transferase, found in Sinorhizobium fredii (strain NBRC 101917 / NGR234).